We begin with the raw amino-acid sequence, 20 residues long: Small ribosomal subunit protein bS20 (20 aa).

The disordered stretch occupies residues 1 to 20; the sequence is ANNPGARKAIRKIEARTEVN. Residues 11–20 show a composition bias toward basic and acidic residues; sequence RKIEARTEVN.

It belongs to the bacterial ribosomal protein bS20 family.

Functionally, binds directly to 16S ribosomal RNA. This chain is Small ribosomal subunit protein bS20 (rpsT), found in Brevundimonas vesicularis (Pseudomonas vesicularis).